Consider the following 151-residue polypeptide: Transcriptional repressor NrdR (151 aa).

The segment at 3–34 (CPFCNSVDTSVKNSRPSDCKMSVRRRRSCDSC) is a zinc-finger region. One can recognise an ATP-cone domain in the interval 49–139 (VKVLKKDGSV…VYMNFSDVND (91 aa)).

It belongs to the NrdR family. It depends on Zn(2+) as a cofactor.

Negatively regulates transcription of bacterial ribonucleotide reductase nrd genes and operons by binding to NrdR-boxes. The chain is Transcriptional repressor NrdR from Anaplasma marginale (strain Florida).